A 483-amino-acid chain; its full sequence is Linamarin synthase 1 (483 aa).

His-22 serves as the catalytic Proton acceptor. An an anthocyanidin-binding site is contributed by His-22. Asp-124 functions as the Charge relay in the catalytic mechanism. Thr-146, Val-360, Gln-362, His-377, Trp-380, Asn-381, Ser-382, and Glu-385 together coordinate UDP-alpha-D-glucose. Ala-400 is a binding site for an anthocyanidin. The UDP-alpha-D-glucose site is built by Glu-401 and Gln-402.

It belongs to the UDP-glycosyltransferase family. As to expression, expressed in the cortex, xylem and phloem parenchyma, and in specific cells in the endodermis of the petiole of the first unfolded leaf.

It carries out the reaction 2-hydroxy-2-methylpropanenitrile + UDP-alpha-D-glucose = linamarin + UDP + H(+). Functionally, UDP-glucosyltransferase catalyzing in planta synthesis of cyanogenic glucosides. Able to glucosylate acetone cyanohydrin and 2-hydroxy-2-methylbutyronitrile, forming linamarin and lotaustralin. Also accepts, to some extent, a wide range of potential acceptor substrates, including simple alcohols, flavonoids, isoflavonoids and other hydroxynitriles such as p-hydroxymandelonitrile, mandelonitrile, (E)-4-hydroxy-2-methylbut-2-enenitrile and (E)- 2-(hydroxymethyl)but-2-enenitrile. This chain is Linamarin synthase 1, found in Manihot esculenta (Cassava).